A 1192-amino-acid polypeptide reads, in one-letter code: MTEYTNLPVKWTNGIVISDERMMLDPLPSEVSAVLDAPINYSYRYNELRRTHSLKLFGVWSGYIPSHADKHLMIFQLLQQEKELTGDEIRLALRQMQGSIKLPINDKLLDSLDRYSLIFAWIAYAGCLDSAFWQQVCADPKCLVYNPDDNLKFSLMFSLARQYSATTRICSADGLRIPSQISPDLGQLAFDLVFNSSVRQTVWFHANDFPAFDFYTKDVGTMVTFHVNFLYNMTHCVPFKTKQSCAEYLIQKAHEAWSVYCGVLNDTIRHRLRLVEGVGIVTLDVDLQILAAVGWYLPLLVYTIRSVSGSDISEWLNVARREFRDLNCSSMINGEGYVGVPEQFWTIHATSKARMWPRVKKYTCDLTDLYNGDLSSTVLGEGASETGTVKWFDVPLGPKVENFRVVGTRIGALSRANVIYNYEDPSDNCDLARAIGSFVPSLPTSGTRDTNGDLEDAKKMFDYRVSQNVYSICQKGKISSLVSRSVKNLRASLMNGELRVYKGSRLWALRAMLFSDKLRYKSDGQVIDPYESHRGKITVRLNNSSLKMLSAFVTLIELAMAQSSGVEDNMLNGRGLSPLQVRSDREVSRVVIAGAINEPLVGCLRRMYPKLSVIGFGMDAVGENERLTVEGASQRNLACDMLISDIDQTFYSDFTKMCNVTVKHALAFSSWSDYVLMKVNYPSSHLLNEIKQALLSRGFSRIVLPVVMCGQNSFTSEVFVYIGRAGVGGHVDFKNNWFTKNDILMRRYRHMKAPLITIPQVVHSVVSKCVTKHDTELFANPGSIVALTVEYASAREVVSLISEVCSPVWTWRTGAGANKFVNIVGMPSKARAALTRRTDEHYYLKAFERNIVGTSFGMYKGIPRIDALNCVSWVTIFGAAMRECLYWIVDTLKVQYNEVISIGARNMTDIEFIKPSVKLTCYDEYYANPQDLATHYNVNYENKYFNWLSPTLVNDSVYVANFVIMAPTEGSESPSATEQLDRIDSVAGAMAKSSITRMTFVGNLYDSRFLADIALSSLPPEGLKVNDTRTTVQIGKYPPCAAVKPSAFLERMKKYKGVLSYHVYPLGYDRVLKTCADNLWIPDVAGSPMLAFCQGLSYAFYITKPAIPDEGIDQFMLDDMPDDGSGSVTPTQSPSPSPSPSAAANTEASTVVEPIDNLNVVSPTVPGQPSQTPVNPNQSTELQSVAKPGIVR.

Residues I1112–R1192 are disordered. The segment covering P1140–T1150 has biased composition (low complexity). The span at N1159–Q1183 shows a compositional bias: polar residues.

The protein localises to the virion. The enzyme catalyses a 5'-end diphospho-ribonucleoside in mRNA + GTP + H(+) = a 5'-end (5'-triphosphoguanosine)-ribonucleoside in mRNA + diphosphate. The catalysed reaction is a 5'-end (5'-triphosphoguanosine)-ribonucleoside in mRNA + S-adenosyl-L-methionine = a 5'-end (N(7)-methyl 5'-triphosphoguanosine)-ribonucleoside in mRNA + S-adenosyl-L-homocysteine. Its function is as follows. Outer capsid protein involved in mRNA capping. Catalyzes the last 3 enzymatic activities for formation of the 5' cap structure on the viral plus-strand transcripts, namely the RNA guanylyltransferase, RNA-7N- and RNA-2'O-methyltransferase activities. This Rice ragged stunt virus (isolate Thailand) (RRSV) protein is Outer capsid protein VP2 (S2).